The sequence spans 398 residues: Acetate kinase (398 aa).

Position 9 (asparagine 9) interacts with Mg(2+). An ATP-binding site is contributed by lysine 16. Substrate is bound at residue arginine 93. The active-site Proton donor/acceptor is aspartate 150. ATP is bound by residues 209–213 (HLGAG), 284–286 (DMR), and 329–333 (GIGEH). Glutamate 382 lines the Mg(2+) pocket.

This sequence belongs to the acetokinase family. Homodimer. The cofactor is Mg(2+). Mn(2+) is required as a cofactor.

Its subcellular location is the cytoplasm. It carries out the reaction acetate + ATP = acetyl phosphate + ADP. The protein operates within metabolic intermediate biosynthesis; acetyl-CoA biosynthesis; acetyl-CoA from acetate: step 1/2. Catalyzes the formation of acetyl phosphate from acetate and ATP. Can also catalyze the reverse reaction. This is Acetate kinase from Rhodopseudomonas palustris (strain ATCC BAA-98 / CGA009).